The chain runs to 113 residues: Ribonuclease P protein component (113 aa).

This sequence belongs to the RnpA family. Consists of a catalytic RNA component (M1 or rnpB) and a protein subunit.

It carries out the reaction Endonucleolytic cleavage of RNA, removing 5'-extranucleotides from tRNA precursor.. In terms of biological role, RNaseP catalyzes the removal of the 5'-leader sequence from pre-tRNA to produce the mature 5'-terminus. It can also cleave other RNA substrates such as 4.5S RNA. The protein component plays an auxiliary but essential role in vivo by binding to the 5'-leader sequence and broadening the substrate specificity of the ribozyme. In Geotalea uraniireducens (strain Rf4) (Geobacter uraniireducens), this protein is Ribonuclease P protein component.